Here is a 1485-residue protein sequence, read N- to C-terminus: Sex-determining transformer protein 2 (1485 aa).

Positions methionine 1–isoleucine 28 are cleaved as a signal peptide. Helical transmembrane passes span valine 438–tryptophan 458, isoleucine 490–leucine 510, tryptophan 584–isoleucine 604, glycine 732–isoleucine 752, leucine 923–threonine 943, leucine 950–phenylalanine 970, aspartate 980–phenylalanine 1000, alanine 1033–valine 1053, and threonine 1063–alanine 1083. The interaction with fem-3 stretch occupies residues aspartate 1131–lysine 1271. The tract at residues tyrosine 1143–asparagine 1175 is disordered. The helical transmembrane segment at alanine 1181–leucine 1201 threads the bilayer. Disordered stretches follow at residues serine 1228 to glutamate 1252, glutamate 1275 to arginine 1306, and glutamate 1348 to proline 1384. Residues glutamate 1275 to glutamine 1284 show a composition bias toward basic and acidic residues. The tract at residues cysteine 1401–arginine 1422 is MX regulatory domain; required for tra-1 binding. Residues proline 1442–leucine 1485 form a disordered region. The span at alanine 1456 to aspartate 1472 shows a compositional bias: basic and acidic residues.

In terms of assembly, interacts with tra-1 and fem-3. Somatic and germline tissues.

Its subcellular location is the membrane. Its function is as follows. Plays a major role in controlling sexual cell fates. Promotes female development in XX animals where it sequesters one or more of the FEM proteins to the membrane thereby freeing the tra-1 protein (a putative transcription factor) to enter the nucleus and promote female development. In XO animals it acts as a receptor for her-1 which prevents it from binding to FEM proteins thereby repressing the activity of tra-1. Negatively regulates male development when bound to fem-3 and is required together with tra-1 for promoting spermatogenesis. The polypeptide is Sex-determining transformer protein 2 (Caenorhabditis remanei (Caenorhabditis vulgaris)).